Reading from the N-terminus, the 775-residue chain is MATPDSLALFTGLGLSENKARETLKNEALSTQLREAATQAHQILGSTIDKATGVLLYDLVSRLRDTRRRSFLVSYIANKKIHTGLQLSAALEYVRSHPQDPIDTKDFEQECGVGVVVTPEQIEEAVESTINKHQLQLLAERYRFNMGLLMGEARAALRWADGKMIKNEVDMQVLHLLGPKMEADLVKKPKVAKARLEETDRKTAKDVVEKGEVAGQTLSLMEQLRGEALKFHKPGENYKTPGYVITPYTMDLLKQHLEITGGQVRTRFPPEPNGILHIGHAKAINFNFGYAKANNGICFLRFDDTNPEKEEAKFFTAIYDMVTWLGYTPYKVTYASDYFDQLYAWAVELIHGGLAYVCHQRVEELKGHNPLPSPWRDRPKEESLLLFEAMRKGKFAEGEATLRMKLVMEDGKMDPVAYRVKYTPHHRTGDKWCIYPTYDYTHCLCDSIEHITHSLCTKEFQARRSSYFWLCNALKVYCPVQWEYGRLNLHYAVVSKRKILQLVAAGAVRDWDDPRLFTLTALRRRGFPPEAINNFCARVGVTVAQTTMEPHLLEACVRDVLNDAAPRAMAVLEPLQVVITNFPAPKPLDIRVPNFPADETKGFHQVPFASTVFIERSDFKEESEPGYKRLASGQPVGLRHTGYVIELQNIVRGSSGCVERLEVTCRRADAGEKPKAFIHWVSQPLVCEIRLYECLFQHKNPEDPVEVPGGFLSDLNPASLQVVEGALVDCSVALAKPFDKFQFERLGYFSVDPDSHQGQIVFNRTVTLKEDPGKI.

An N-acetylalanine modification is found at A2. S70 bears the Phosphoserine mark. Residues 271–273 and 277–283 each bind ATP; these read EPN and HIGHAKA. D303 is an L-glutamine binding site. Residue K309 is modified to N6-acetyllysine. Y438 lines the L-glutamine pocket. Residues T457, 486 to 487, and 494 to 496 each bind ATP; these read RL and VSK. Phosphoserine is present on S495.

This sequence belongs to the class-I aminoacyl-tRNA synthetase family. Monomer. Part of a multisubunit complex that groups tRNA ligases for Arg (RARS1), Asp (DARS1), Gln (QARS1), Ile (IARS1), Leu (LARS1), Lys (KARS1), Met (MARS1) the bifunctional ligase for Glu and Pro (EPRS1) and the auxiliary subunits AIMP1/p43, AIMP2/p38 and EEF1E1/p18. Interacts with RARS1. Part of a complex composed of RARS1, QARS1 and AIMP1.

The protein resides in the cytoplasm. It localises to the cytosol. The catalysed reaction is tRNA(Gln) + L-glutamine + ATP = L-glutaminyl-tRNA(Gln) + AMP + diphosphate. Its function is as follows. Glutamine--tRNA ligase. Plays a critical role in brain development. The chain is Glutamine--tRNA ligase (Qars1) from Mus musculus (Mouse).